Reading from the N-terminus, the 849-residue chain is Major vault protein (849 aa).

9 MVP repeats span residues 2 to 54 (EDPV…VPPR), 55 to 109 (HYCV…GVTP), 110 to 162 (LQVV…ETLQ), 163 to 215 (ATII…DVVD), 216 to 270 (AYVL…AEVL), 271 to 321 (VTTL…IQDV), 322 to 378 (YVLS…RRQA), 379 to 458 (LALA…RTRA), and 459 to 521 (VTYQ…RLGP).

As to quaternary structure, the vault ribonucleoprotein particle is a huge (400 A x 670 A) cage structure of 12.9 MDa. It consists of a dimer of half-vaults, with each half-vault comprising 39 identical major vault protein (MVP) chains, PARP4 and one or more vault RNAs (vRNAs).

The protein resides in the cytoplasm. Its subcellular location is the nucleus. Required for normal vault structure. Vaults are multi-subunit structures that may act as scaffolds for proteins involved in signal transduction. Vaults may also play a role in nucleo-cytoplasmic transport. The polypeptide is Major vault protein (MVP) (Gallus gallus (Chicken)).